An 897-amino-acid chain; its full sequence is MAAAAQLSLTQLSSGNPVYEKYYRQVEAGNTGRVLALDAAAFLKKSGLPDLILGKIWDLADTDGKGVLSKQEFFVALRLVACAQNGLEVSLSSLSLAVPPPRFHDSSSPLLTSGPSVAELPWAVKSEDKAKYDAIFDSLSPVDGFLSGDKVKPVLLNSKLPVEILGRVWELSDIDHDGKLDRDEFAVAMFLVYCALEKEPVPMSLPPALVPPSKRKTWVVSPAEKAKYDEIFLKTDKDMDGYVSGLEVRETFLKTGLPSALLAHIWSLCDTKGCGKLSKDQFALAFHLINQKLIKGIDPPHSLTPEMIPPSDRSSLQKNITGSSPVADFSAIKELDTLNNEIVDLQREKNNVEQDLKEKEDTVKQRTSEVQDLQDEVQRESINLQKLQAQKQQVQELLGELDEQKAQLEEQLQEVRKKCAEEAQLISSLKAEITSQESQISSYEEELLKAREELSRLQQETAQLEESVESGKAQLEPLQQHLQESQQEISSMQMRLEMKDLETDNNQSNWSSSPQSVLVNGATDYCSLSTSSSETANFNEHAEGQNNLESEPTHQESSVRSSPEIAPSDVTDESEAVTVAGNEKVTPRFDDDKHSKEEDPFNVESSSLTDAVADTNLDFFQSDPFVGSDPFKDDPFGKIDPFGGDPFKGSDPFASDCFFKQTSTDPFTTSSTDPFSASSNSSNTSVETWKHNDPFAPGGTVVAAASDSATDPFASVFGNESFGDGFADFSTLSKVNNEDAFNPTISSSTSSVTIAKPMLEETASKSEDVPPALPPKVGTPTRPCPPPPGKRPINKLDSSDPLKLNDPFQPFPGNDSPKEKDPDMFCDPFTSSTTTNKEADPSNFANFSAYPSEEDMIEWAKRESEREEEQRLARLNQQEQEDLELAIALSKSEISEA.

At Ala2 the chain carries N-acetylalanine. The tract at residues 2–330 (AAAAQLSLTQ…TGSSPVADFS (329 aa)) is interaction with DAB2. An EH 1 domain is found at 15 to 104 (GNPVYEKYYR…SLAVPPPRFH (90 aa)). The EF-hand 1 domain maps to 48-83 (LPDLILGKIWDLADTDGKGVLSKQEFFVALRLVACA). 2 positions are modified to phosphoserine: Ser108 and Ser140. EH domains lie at 128–216 (DKAK…SKRK) and 224–314 (EKAK…SDRS). EF-hand domains are found at residues 160–195 (LPVE…VYCA), 223–258 (AEKA…TGLP), and 262–292 (LAHI…INQK). Residues Asp173, Asp175, Asp177, Lys179, Glu184, Asp236, Asp238, Asp240, Tyr242, and Glu247 each coordinate Ca(2+). Position 321 is a phosphothreonine (Thr321). Ser323, Ser324, Ser467, Ser470, Ser485, Ser561, and Ser562 each carry phosphoserine. Residues 528–561 (LSTSSSETANFNEHAEGQNNLESEPTHQESSVRS) show a composition bias toward polar residues. Residues 528 to 607 (LSTSSSETAN…EDPFNVESSS (80 aa)) are disordered. The segment covering 585 to 599 (VTPRFDDDKHSKEED) has biased composition (basic and acidic residues). 11 tandem repeats follow at residues 599–601 (DPF), 623–625 (DPF), 629–631 (DPF), 634–636 (DPF), 640–642 (DPF), 645–647 (DPF), 651–653 (DPF), 665–667 (DPF), 673–675 (DPF), 693–695 (DPF), and 711–713 (DPF). The tract at residues 599–829 (DPFNVESSSL…KDPDMFCDPF (231 aa)) is 13 X 3 AA repeats of D-P-F. A compositionally biased stretch (low complexity) spans 667–685 (FTTSSTDPFSASSNSSNTS). The segment at 667–692 (FTTSSTDPFSASSNSSNTSVETWKHN) is disordered. Positions 741 to 849 (FNPTISSSTS…DPSNFANFSA (109 aa)) are disordered. Positions 744–754 (TISSSTSSVTI) are enriched in low complexity. Ser748 carries the post-translational modification Phosphoserine. Positions 758–768 (MLEETASKSED) are enriched in basic and acidic residues. Residues Thr779 and Thr781 each carry the phosphothreonine modification. Ser798 carries the post-translational modification Phosphoserine. Repeat 12 spans residues 806–808 (DPF). Ser816 is subject to Phosphoserine. Repeat unit 13 spans residues 827–829 (DPF). Tyr850 is modified (phosphotyrosine; by EGFR). UIM domains lie at 852-871 (SEED…EEQR) and 878-897 (QEQE…ISEA).

In terms of assembly, interacts with HGS; the interaction bridges the interaction of STAM or STAM2 with EPS15. Isoform 2 interacts with HGS and AP2A2. Part of a complex at least composed of EPS15, HGS, and either STAM or STAM2. Binds AP2A2. Interacts with AP2B1; clathrin competes with EPS15. Binds STON2. Interacts (via its SH3-binding sites) with CRK. Interacts with SH3BP4/TTP. Interacts with ERBB2. Interacts (via UIM repeats) with CORO7 (when ubiquitinated at 'Lys-472'). Interacts with FCHO1. Interacts with FCHO2. Interacts with SGIP1. Interacts (via EH domains) with DAB2. Interacts (via UIM domains) with UBQLN1 (via ubiquitin-like domain) and can interact with both the ubiquitinated and the non-ubiquitinated forms of UBQLN1. Interacts with UBQLN2. Interacts with REPS2; the interaction is direct. Interacts with EPN1; the interaction is direct. Phosphorylated on serine upon DNA damage, probably by ATM or ATR. Phosphorylation on Tyr-850 is involved in the internalization of EGFR. Not required for membrane translocation after EGF treatment or for targeting to coated pits, but essential for a subsequent step in EGFR endocytosis. In terms of processing, ubiquitinated.

Its subcellular location is the cytoplasm. The protein localises to the cell membrane. It localises to the membrane. It is found in the clathrin-coated pit. The protein resides in the early endosome membrane. Functionally, involved in cell growth regulation. May be involved in the regulation of mitogenic signals and control of cell proliferation. Involved in the internalization of ligand-inducible receptors of the receptor tyrosine kinase (RTK) type, in particular EGFR. Plays a role in the assembly of clathrin-coated pits (CCPs). Acts as a clathrin adapter required for post-Golgi trafficking. Seems to be involved in CCPs maturation including invagination or budding. Involved in endocytosis of integrin beta-1 (ITGB1) and transferrin receptor (TFR); internalization of ITGB1 as DAB2-dependent cargo but not TFR seems to require association with DAB2. This is Epidermal growth factor receptor substrate 15 (Eps15) from Mus musculus (Mouse).